The sequence spans 132 residues: PGA2-homolog C27.01c (132 aa).

A helical membrane pass occupies residues 17–34 (WIRIIVYVGGYMLIRPYL). Disordered regions lie at residues 50 to 90 (LLEG…DAEF) and 106 to 132 (EYFKNQDKSPLDAYADDDEDIEEHLED). A compositionally biased stretch (basic and acidic residues) spans 62–75 (EMTHGTKPKEHGEF). Residues 76 to 87 (DTDDEEEEENPD) are compositionally biased toward acidic residues. Threonine 77 is subject to Phosphothreonine. A compositionally biased stretch (basic and acidic residues) spans 106-115 (EYFKNQDKSP). Positions 119-132 (YADDDEDIEEHLED) are enriched in acidic residues.

Belongs to the PGA2 family.

It localises to the endoplasmic reticulum membrane. It is found in the nucleus membrane. Its function is as follows. Involved processing and trafficking glycosylated proteins. In Schizosaccharomyces pombe (strain 972 / ATCC 24843) (Fission yeast), this protein is PGA2-homolog C27.01c.